A 301-amino-acid chain; its full sequence is 4-hydroxy-tetrahydrodipicolinate synthase (301 aa).

Thr57 is a pyruvate binding site. Tyr143 (proton donor/acceptor) is an active-site residue. The active-site Schiff-base intermediate with substrate is Lys171. Residue Ile211 coordinates pyruvate.

Belongs to the DapA family. Homotetramer; dimer of dimers.

The protein localises to the cytoplasm. It catalyses the reaction L-aspartate 4-semialdehyde + pyruvate = (2S,4S)-4-hydroxy-2,3,4,5-tetrahydrodipicolinate + H2O + H(+). It participates in amino-acid biosynthesis; L-lysine biosynthesis via DAP pathway; (S)-tetrahydrodipicolinate from L-aspartate: step 3/4. In terms of biological role, catalyzes the condensation of (S)-aspartate-beta-semialdehyde [(S)-ASA] and pyruvate to 4-hydroxy-tetrahydrodipicolinate (HTPA). The polypeptide is 4-hydroxy-tetrahydrodipicolinate synthase (Bifidobacterium longum (strain DJO10A)).